The chain runs to 357 residues: Probable cinnamyl alcohol dehydrogenase (357 aa).

Residue C47 participates in Zn(2+) binding. Position 49 (T49) interacts with NADP(+). Zn(2+)-binding residues include H69, E70, C100, C103, C106, C114, and C163. NADP(+)-binding positions include T167, 188–193, 211–216, T251, G275, and 298–300; these read GLGGVG, SSSDKK, and SFI.

This sequence belongs to the zinc-containing alcohol dehydrogenase family. In terms of assembly, homodimer. Requires Zn(2+) as cofactor.

It carries out the reaction (E)-cinnamyl alcohol + NADP(+) = (E)-cinnamaldehyde + NADPH + H(+). The enzyme catalyses (E)-coniferol + NADP(+) = (E)-coniferaldehyde + NADPH + H(+). The catalysed reaction is (E)-sinapyl alcohol + NADP(+) = (E)-sinapaldehyde + NADPH + H(+). It catalyses the reaction (E)-4-coumaroyl alcohol + NADP(+) = (E)-4-coumaraldehyde + NADPH + H(+). It carries out the reaction (E)-caffeyl alcohol + NADP(+) = (E)-caffeyl aldehyde + NADPH + H(+). The protein operates within aromatic compound metabolism; phenylpropanoid biosynthesis. Its function is as follows. Involved in lignin biosynthesis. Catalyzes the final step specific for the production of lignin monomers. Catalyzes the NADPH-dependent reduction of coniferaldehyde, 5-hydroxyconiferaldehyde, sinapaldehyde, 4-coumaraldehyde and caffeyl aldehyde to their respective alcohols. The polypeptide is Probable cinnamyl alcohol dehydrogenase (Populus deltoides (Eastern poplar)).